A 283-amino-acid chain; its full sequence is MPVSRYAVFGHPVAHSLSPAIHADFGKQTGIALDYTAIDAAPEEFTAALERFAADGGKGANVTLPLKEAAFALSASLSDRARVAGAVNTLVRNDGQWQGDNTDGAGLVRDLTERHGLDLRGRRVLLLGAGGAARGVAPALLEAGITEMVVVNRSPERADALCDALGEPGRVVSRYLEDLRELGDFELIVNATAAGRDRDAGAFALPLGLVNSLTAAVDLNYGATAIAFLAWARSAQCRYAIDGLGMLVEQAAESFALWHGVRPQTDPVYDALRARDAVLVSAD.

Shikimate is bound by residues 16 to 18 (SLS) and threonine 63. Catalysis depends on lysine 67, which acts as the Proton acceptor. Residue aspartate 79 participates in NADP(+) binding. Residues asparagine 88 and aspartate 103 each contribute to the shikimate site. NADP(+) is bound by residues 128–132 (GAGGA), alanine 223, and glycine 243.

This sequence belongs to the shikimate dehydrogenase family. As to quaternary structure, homodimer.

The enzyme catalyses shikimate + NADP(+) = 3-dehydroshikimate + NADPH + H(+). It participates in metabolic intermediate biosynthesis; chorismate biosynthesis; chorismate from D-erythrose 4-phosphate and phosphoenolpyruvate: step 4/7. In terms of biological role, involved in the biosynthesis of the chorismate, which leads to the biosynthesis of aromatic amino acids. Catalyzes the reversible NADPH linked reduction of 3-dehydroshikimate (DHSA) to yield shikimate (SA). The protein is Shikimate dehydrogenase (NADP(+)) of Xanthomonas campestris pv. campestris (strain 8004).